We begin with the raw amino-acid sequence, 304 residues long: Insulin-like growth factor 1 receptor (304 aa).

Fibronectin type-III domains lie at 1–43 (ERTV…TMPA) and 49–142 (IPGP…VQAK). Residues 1–147 (ERTVISNLRP…YVQAKTTYEN (147 aa)) are Extracellular-facing. Asn115 and Asn128 each carry an N-linked (GlcNAc...) asparagine glycan. A helical membrane pass occupies residues 148–168 (FIHLIIALPVAVLLIVGGLVI). Residues 169 to 304 (MLYVFHRKRN…HMNGGRKNER (136 aa)) lie on the Cytoplasmic side of the membrane. Phosphoserine; by GSK3-beta is present on Ser225. Position 229 is a phosphoserine (Ser229). The tract at residues 231-304 (ENKPPEPEEL…HMNGGRKNER (74 aa)) is disordered. The span at 237–246 (PEELDLEPEN) shows a compositional bias: acidic residues. Positions 247–263 (MESVPLDPSASSSSLPL) are enriched in low complexity. Positions 264 to 273 (PDRHSGHKAE) are enriched in basic and acidic residues.

Belongs to the protein kinase superfamily. Tyr protein kinase family. Insulin receptor subfamily. In terms of assembly, tetramer of 2 alpha and 2 beta chains linked by disulfide bonds. The alpha chains contribute to the formation of the ligand-binding domain, while the beta chain carries the kinase domain. Forms a hybrid receptor with INSR, the hybrid is a tetramer consisting of 1 alpha chain and 1 beta chain of INSR and 1 alpha chain and 1 beta chain of IGF1R. Interacts with ARRB1 and ARRB2. Interacts with GRB10. Interacts with RACK1. Interacts with SOCS1, SOCS2 and SOCS3. Interacts with 14-3-3 proteins. Interacts with NMD2. Interacts with MAP3K5. Interacts with STAT3. Found in a ternary complex with IGF1 and ITGAV:ITGB3 or ITGA6:ITGB4. Interacts (nascent precursor form) with ZFAND2B. In terms of processing, autophosphorylated on tyrosine residues in response to ligand binding. Autophosphorylation occurs in trans, i.e. one subunit of the dimeric receptor phosphorylates tyrosine residues on the other subunit. Autophosphorylation occurs in a sequential manner. While every single phosphorylation increases kinase activity, all three tyrosine residues in the kinase activation loop have to be phosphorylated for optimal activity. Can be autophosphorylated at additional tyrosine residues (in vitro). May also be phosphorylated at tyrosine residues by mTORC2. Autophosphorylated is followed by phosphorylation of juxtamembrane tyrosines and C-terminal serines. Phosphorylation of Ser-225 by GSK-3beta restrains kinase activity and promotes cell surface expression, it requires a priming phosphorylation at Ser-229. Dephosphorylated by PTPN1. Polyubiquitinated in the activation loop through both 'Lys-48' and 'Lys-29' linkages, promoting receptor endocytosis and subsequent degradation by the proteasome. Ubiquitination is facilitated by pre-existing phosphorylation. Post-translationally, sumoylated with SUMO1. In terms of processing, controlled by regulated intramembrane proteolysis (RIP). Undergoes metalloprotease-dependent constitutive ectodomain shedding to produce a membrane-anchored 52 kDa C-Terminal fragment which is further processed by presenilin gamma-secretase to yield an intracellular 50 kDa fragment.

The protein localises to the cell membrane. The catalysed reaction is L-tyrosyl-[protein] + ATP = O-phospho-L-tyrosyl-[protein] + ADP + H(+). Its activity is regulated as follows. Activated by autophosphorylation at tyrosines in the kinase activation loop; phosphorylation at all three tyrosine residues is required for optimal kinase activity. Inhibited by MSC1609119A-1, BMS-754807, PQIP, benzimidazole pyridinone, isoquinolinedione, bis-azaindole, 3-cyanoquinoline, 2,4-bis-arylamino-1,3-pyrimidine, pyrrolopyrimidine, pyrrole-5-carboxaldehyde, picropodophyllin (PPP), tyrphostin derivatives. While most inhibitors bind to the ATP binding pocket, MSC1609119A-1 functions as allosteric inhibitor and binds close to the DFG motif and the activation loop. Its function is as follows. Receptor tyrosine kinase which mediates actions of insulin-like growth factor 1 (IGF1). Binds IGF1 with high affinity and IGF2 and insulin (INS) with a lower affinity. The activated IGF1R is involved in cell growth and survival control. IGF1R is crucial for tumor transformation and survival of malignant cell. Ligand binding activates the receptor kinase, leading to receptor autophosphorylation, and tyrosines phosphorylation of multiple substrates, that function as signaling adapter proteins including, the insulin-receptor substrates (IRS1/2), Shc and 14-3-3 proteins. Phosphorylation of IRSs proteins lead to the activation of two main signaling pathways: the PI3K-AKT/PKB pathway and the Ras-MAPK pathway. The result of activating the MAPK pathway is increased cellular proliferation, whereas activating the PI3K pathway inhibits apoptosis and stimulates protein synthesis. Phosphorylated IRS1 can activate the 85 kDa regulatory subunit of PI3K (PIK3R1), leading to activation of several downstream substrates, including protein AKT/PKB. AKT phosphorylation, in turn, enhances protein synthesis through mTOR activation and triggers the antiapoptotic effects of IGFIR through phosphorylation and inactivation of BAD. In parallel to PI3K-driven signaling, recruitment of Grb2/SOS by phosphorylated IRS1 or Shc leads to recruitment of Ras and activation of the ras-MAPK pathway. In addition to these two main signaling pathways IGF1R signals also through the Janus kinase/signal transducer and activator of transcription pathway (JAK/STAT). Phosphorylation of JAK proteins can lead to phosphorylation/activation of signal transducers and activators of transcription (STAT) proteins. In particular activation of STAT3, may be essential for the transforming activity of IGF1R. The JAK/STAT pathway activates gene transcription and may be responsible for the transforming activity. JNK kinases can also be activated by the IGF1R. IGF1 exerts inhibiting activities on JNK activation via phosphorylation and inhibition of MAP3K5/ASK1, which is able to directly associate with the IGF1R. When present in a hybrid receptor with INSR, binds IGF1. The protein is Insulin-like growth factor 1 receptor (IGF1R) of Sus scrofa (Pig).